A 307-amino-acid chain; its full sequence is 3-methyl-2-oxobutanoate hydroxymethyltransferase (307 aa).

The Mg(2+) site is built by aspartate 61 and aspartate 100. 3-methyl-2-oxobutanoate contacts are provided by residues 61–62, aspartate 100, and lysine 130; that span reads DS. A Mg(2+)-binding site is contributed by glutamate 132. Glutamate 199 serves as the catalytic Proton acceptor.

This sequence belongs to the PanB family. Homodecamer; pentamer of dimers. The cofactor is Mg(2+).

It localises to the cytoplasm. The catalysed reaction is 3-methyl-2-oxobutanoate + (6R)-5,10-methylene-5,6,7,8-tetrahydrofolate + H2O = 2-dehydropantoate + (6S)-5,6,7,8-tetrahydrofolate. It functions in the pathway cofactor biosynthesis; (R)-pantothenate biosynthesis; (R)-pantoate from 3-methyl-2-oxobutanoate: step 1/2. Functionally, catalyzes the reversible reaction in which hydroxymethyl group from 5,10-methylenetetrahydrofolate is transferred onto alpha-ketoisovalerate to form ketopantoate. This chain is 3-methyl-2-oxobutanoate hydroxymethyltransferase, found in Nitratidesulfovibrio vulgaris (strain ATCC 29579 / DSM 644 / CCUG 34227 / NCIMB 8303 / VKM B-1760 / Hildenborough) (Desulfovibrio vulgaris).